A 619-amino-acid polypeptide reads, in one-letter code: Chaperone protein HscA homolog (619 aa).

This sequence belongs to the heat shock protein 70 family.

Chaperone involved in the maturation of iron-sulfur cluster-containing proteins. Has a low intrinsic ATPase activity which is markedly stimulated by HscB. The protein is Chaperone protein HscA homolog of Laribacter hongkongensis (strain HLHK9).